The sequence spans 1057 residues: Probable E3 ubiquitin-protein ligase HERC4 (1057 aa).

RCC1 repeat units lie at residues 1-51 (MLCW…FVLD), 52-101 (DGTV…ALND), 102-154 (KGQV…ALSK), 156-207 (SEVF…VLTL), 208-259 (SGAI…ALTK), 261-311 (GGVF…AFVP), and 313-368 (SGRI…KRIF). In terms of domain architecture, HECT spans 730–1057 (KNIDYKKPLK…IDHNEGFSLI (328 aa)). Cys-1025 (glycyl thioester intermediate) is an active-site residue.

In terms of tissue distribution, expressed in brain and testis and detected in heart and placenta.

It localises to the cytoplasm. It is found in the cytosol. It carries out the reaction S-ubiquitinyl-[E2 ubiquitin-conjugating enzyme]-L-cysteine + [acceptor protein]-L-lysine = [E2 ubiquitin-conjugating enzyme]-L-cysteine + N(6)-ubiquitinyl-[acceptor protein]-L-lysine.. It functions in the pathway protein modification; protein ubiquitination. Its function is as follows. Probable E3 ubiquitin-protein ligase involved in either protein trafficking or in the distribution of cellular structures. Required for spermatozoon maturation and fertility, and for the removal of the cytoplasmic droplet of the spermatozoon. E3 ubiquitin-protein ligases accept ubiquitin from an E2 ubiquitin-conjugating enzyme in the form of a thioester and then directly transfer it to targeted substrates. The polypeptide is Probable E3 ubiquitin-protein ligase HERC4 (HERC4) (Homo sapiens (Human)).